Reading from the N-terminus, the 239-residue chain is Probable inner membrane transporter protein TsaS (239 aa).

4 consecutive transmembrane segments (helical) span residues 65-85 (AIGA…WLMG), 128-148 (GLVG…IALL), 160-180 (ATVP…LFGA), and 186-206 (AHTF…VVLG).

The protein belongs to the 4-toluene sulfonate uptake permease (TSUP) (TC 2.A.102) family. As to quaternary structure, part of a two-component transport system composed of TsaT and TsaS.

The protein resides in the cell inner membrane. Functionally, involved in the uptake of p-toluenesulphonate (TSA). This chain is Probable inner membrane transporter protein TsaS (tsaS), found in Comamonas testosteroni (Pseudomonas testosteroni).